A 559-amino-acid polypeptide reads, in one-letter code: Protochlorophyllide-dependent translocon component 52, chloroplastic (559 aa).

The transit peptide at 1-55 (MEAALAACALPSLRILNTKPRFRCSFSNPSLPISPNSLITRKSSRFTTAVSSPPS) directs the protein to the chloroplast. Residues 44–70 (SRFTTAVSSPPSSSAATSTNSPPEPEA) are disordered. Positions 47–64 (TTAVSSPPSSSAATSTNS) are enriched in low complexity. Residues 85–195 (WYPVMPICDL…STVQHEIIWF (111 aa)) form the Rieske domain. Residues C127, H129, C147, and H150 each contribute to the [2Fe-2S] cluster site. Positions 248 and 253 each coordinate Fe cation. Positions 483–486 (CSSC) match the Redox-active motif motif. 2 helical membrane-spanning segments follow: residues 493–513 (LNAL…VMAV) and 525–545 (IAVL…SHFI).

It depends on [2Fe-2S] cluster as a cofactor.

It is found in the plastid. It localises to the chloroplast inner membrane. It carries out the reaction protochlorophyllide a + 4 reduced [2Fe-2S]-[ferredoxin] + 2 O2 + 5 H(+) = protochlorophyllide b + 4 oxidized [2Fe-2S]-[ferredoxin] + 3 H2O. With respect to regulation, down-regulated by light. Part of a translocon most abundantly expressed in etiolated plants and involved in the protochlorophyllide-dependent import of the precursor NADPH:protochlorophyllide oxidoreductase A (pPORA). In Arabidopsis thaliana (Mouse-ear cress), this protein is Protochlorophyllide-dependent translocon component 52, chloroplastic.